Reading from the N-terminus, the 229-residue chain is Orotate phosphoribosyltransferase (229 aa).

5-phospho-alpha-D-ribose 1-diphosphate is bound by residues Arg107, Lys108, Lys111, His113, and Glu133–Ser141. Thr137 provides a ligand contact to orotate.

This sequence belongs to the purine/pyrimidine phosphoribosyltransferase family. PyrE subfamily. Homodimer. It depends on Mg(2+) as a cofactor.

The catalysed reaction is orotidine 5'-phosphate + diphosphate = orotate + 5-phospho-alpha-D-ribose 1-diphosphate. It participates in pyrimidine metabolism; UMP biosynthesis via de novo pathway; UMP from orotate: step 1/2. In terms of biological role, catalyzes the transfer of a ribosyl phosphate group from 5-phosphoribose 1-diphosphate to orotate, leading to the formation of orotidine monophosphate (OMP). This Rhizobium etli (strain CIAT 652) protein is Orotate phosphoribosyltransferase.